The sequence spans 976 residues: Villin-2 (976 aa).

Gelsolin-like repeat units lie at residues 27–77, 148–188, 260–302, 399–450, 531–571, and 633–674; these read FEAV…DEAG, IRLK…QERA, GKME…DERK, GKVK…EDQD, NKAV…EQLE, and FQVE…KEKQ. Residues 769–917 form a disordered region; that stretch reads NSSSNRPAYS…SEIQPSGATF (149 aa). Residues 782-794 show a composition bias toward basic and acidic residues; that stretch reads RLNESHDGPRQRA. Composition is skewed to low complexity over residues 795–812, 823–841, and 848–858; these read EALA…SSTK, SQAS…VLVA, and DTSPTRRSTSS. Ser-890 is subject to Phosphoserine. Polar residues predominate over residues 908–917; it reads SEIQPSGATF. One can recognise an HP domain in the interval 911–976; sequence QPSGATFTYE…DLLKKKFDLF (66 aa).

Belongs to the villin/gelsolin family. Expressed in all tissues examined. Mainly detected in the root epidermis and vasculature. Expressed in the root cap.

The protein resides in the cytoplasm. It localises to the cytoskeleton. Functionally, ca(2+)-regulated actin-binding protein. Involved in actin filaments bundling. Caps the barbed end of actin filaments and is able to sever them in a calcium-dependent manner. Required for the construction of actin collars in pollen tubes. Acts redundantly with VLN5 (AC Q9LVC6) to generate thick actin filament bundles and to regulate polarized pollen tube growth. Acts redundantly with VLN3 (AC O81645) to regulate directional organ growth and in sclerenchyma development. This Arabidopsis thaliana (Mouse-ear cress) protein is Villin-2.